Consider the following 342-residue polypeptide: Hydrogenase expression/formation protein HupV (342 aa).

Belongs to the HupK family.

The polypeptide is Hydrogenase expression/formation protein HupV (hupV) (Azotobacter chroococcum mcd 1).